The chain runs to 339 residues: Tetraacyldisaccharide 4'-kinase (339 aa).

Residue 58-65 participates in ATP binding; that stretch reads TVGGSGKT.

This sequence belongs to the LpxK family.

The catalysed reaction is a lipid A disaccharide + ATP = a lipid IVA + ADP + H(+). The protein operates within glycolipid biosynthesis; lipid IV(A) biosynthesis; lipid IV(A) from (3R)-3-hydroxytetradecanoyl-[acyl-carrier-protein] and UDP-N-acetyl-alpha-D-glucosamine: step 6/6. Functionally, transfers the gamma-phosphate of ATP to the 4'-position of a tetraacyldisaccharide 1-phosphate intermediate (termed DS-1-P) to form tetraacyldisaccharide 1,4'-bis-phosphate (lipid IVA). The sequence is that of Tetraacyldisaccharide 4'-kinase from Shewanella baltica (strain OS185).